A 170-amino-acid chain; its full sequence is Large ribosomal subunit protein bL9 (170 aa).

A disordered region spans residues 149–170 (DGDNEDLDEDNAADENEDYSEE).

The protein belongs to the bacterial ribosomal protein bL9 family.

In terms of biological role, binds to the 23S rRNA. This is Large ribosomal subunit protein bL9 from Psychrobacter cryohalolentis (strain ATCC BAA-1226 / DSM 17306 / VKM B-2378 / K5).